The sequence spans 129 residues: Protein yippee-like At5g53940 (129 aa).

The Yippee domain occupies 12 to 109; sequence RSYRCRFCRT…LERGRIVDEI (98 aa). Cys-16, Cys-19, Cys-72, and Cys-75 together coordinate Zn(2+).

Belongs to the yippee family.

The protein is Protein yippee-like At5g53940 of Arabidopsis thaliana (Mouse-ear cress).